We begin with the raw amino-acid sequence, 431 residues long: Enolase (431 aa).

Residue Gln166 coordinates (2R)-2-phosphoglycerate. Glu208 (proton donor) is an active-site residue. Mg(2+) contacts are provided by Asp245, Glu289, and Asp316. (2R)-2-phosphoglycerate-binding residues include Lys341, Arg370, Ser371, and Lys392. Residue Lys341 is the Proton acceptor of the active site.

It belongs to the enolase family. Requires Mg(2+) as cofactor.

It is found in the cytoplasm. The protein localises to the secreted. The protein resides in the cell surface. It carries out the reaction (2R)-2-phosphoglycerate = phosphoenolpyruvate + H2O. The protein operates within carbohydrate degradation; glycolysis; pyruvate from D-glyceraldehyde 3-phosphate: step 4/5. Functionally, catalyzes the reversible conversion of 2-phosphoglycerate (2-PG) into phosphoenolpyruvate (PEP). It is essential for the degradation of carbohydrates via glycolysis. The polypeptide is Enolase (Ruminiclostridium cellulolyticum (strain ATCC 35319 / DSM 5812 / JCM 6584 / H10) (Clostridium cellulolyticum)).